Reading from the N-terminus, the 104-residue chain is Large ribosomal subunit protein uL23 (104 aa).

This sequence belongs to the universal ribosomal protein uL23 family. Part of the 50S ribosomal subunit. Contacts protein L29, and trigger factor when it is bound to the ribosome.

One of the early assembly proteins it binds 23S rRNA. One of the proteins that surrounds the polypeptide exit tunnel on the outside of the ribosome. Forms the main docking site for trigger factor binding to the ribosome. In Ralstonia pickettii (strain 12J), this protein is Large ribosomal subunit protein uL23.